We begin with the raw amino-acid sequence, 1018 residues long: MSHLRSVAAKLKPYCTGLLVKHNSILRTLPPRCYVYSSGAKEPFLSGTNSSYVEEMYYAWLENPKSVHKSWDAFFRSADNGTPQCEIQGVPSLADIESKLPSLSSQGLATAPAKAEKIVEEHLAVQSLIRAYQIRGHHVAQLDPLGILDADLDSFVPSDLITTLDKLGFYGLHEGDLDKVFRLPTTTYIGGTDSTLSLREIIRRLENSYCQHIGLEFMFINDVEQCQWIRQKFETPGIMKFINEEKRTLLARLIRSTRFEDFLARKWSSEKRFGLEGCEVMIPALKAIIDKSSEMGLEYVILGMPHRGRLNVLANVIRKDLDQIFCQFDPKLEASDEGSGDVKYHLGMYHERINRATNKKITLSLVANPSHLEAVDPVVQGKTKAEQFYRGDTEGNKVMSILVHGDAAFAGQGVVYETFHLSDLPSYTTNGTIHIVVNNQIGFTTDPRMARSSPYPTDVARVVNAPIFHVNADDPEAVMYVCSVAAEWRNTFNKDVVVDLVCYRRSGHNEMDEPMFTQPLMYKQIHKQVPVLKKYADKMIAEGTVTLQEFEEEIAKYDRICEEAYARSKDKKILNIKHWLDSPWPGFFTLDGEPKSMTCPPTGIPEDMLSHIGAIASSVPLKDFKIHGGLSRILKSRLEMTNSRTVDWALAEYMTFGSLLKEGIHVRLSGQDVERGTFSHRHHVLHDQEVDRWTCVPMNHLWPNQAPYTVCNSSLSEYGVLGFELGFAMASPNALVLWEAQFGDFYNTAQCIIDQFISSGQAKWVRHNGIVLLLPHGMEGMGPEHSSARPERFLQMSNDDSDAYPEFTQDFDVSQLFDCNWIVVNCSNPASYFHVLRRQILLPFRKPLIIFTPKSLLRHPEAKSSFDDMKTGTNFQRVIPENGAASHSPQEVKRVIFCTGKVYYELVKERHRKGLDSQVAITRLEQISPFPFDLVKQEAEKYATSELVWCQEEHKNMGYYDYVKARFLTILNHARPVWYVGRDPAAAPATGNKNTHHVELRRFLDIAFDLEYFEGKPF.

The Ca(2+) site is built by His-138, Asp-151, and Asp-153. Thiamine diphosphate-binding residues include Arg-307, Asp-406, Asn-439, Ile-441, and Gln-671. Mg(2+)-binding residues include Asp-406, Asn-439, and Ile-441.

This sequence belongs to the alpha-ketoglutarate dehydrogenase family. In terms of assembly, the OGDHC complex comprises multiple copies of three catalytic enzyme components, the 2-oxoglutarate dehydrogenase (OGDH/E1), the dihydrolipoamide dehydrogenase (DLST/E2) and the dihydrolipoamide dehydrogenase (DLD/E3). OGDHL/E1-like isoenzyme may replace OGDH in the OGDHC complex in the brain. Requires thiamine diphosphate as cofactor. Mg(2+) serves as cofactor.

Its subcellular location is the mitochondrion matrix. The catalysed reaction is N(6)-[(R)-lipoyl]-L-lysyl-[protein] + 2-oxoglutarate + H(+) = N(6)-[(R)-S(8)-succinyldihydrolipoyl]-L-lysyl-[protein] + CO2. Functionally, 2-oxoglutarate dehydrogenase (E1-like) component of the 2-oxoglutarate dehydrogenase multienzyme complex (OGDHC) which mediates the decarboxylation of alpha-ketoglutarate in the tricarboxylic acid cycle. The OGDHC complex catalyzes the overall conversion of 2-oxoglutarate to succinyl-CoA and CO(2) while reducing NAD(+) to NADH. The OGDHC complex is mainly active in the mitochondrion. Involved in the inhibition of cell proliferation and in apoptosis. This is 2-oxoglutarate dehydrogenase-like, mitochondrial (ogdhl) from Xenopus laevis (African clawed frog).